We begin with the raw amino-acid sequence, 376 residues long: Probable ureide permease A3 (376 aa).

The Extracellular segment spans residues 1–9; sequence HLVESKGGA. The helical transmembrane segment at 10 to 30 threads the bilayer; that stretch reads IACMFLALFFLGTWPALLTML. At 31 to 41 the chain is on the cytoplasmic side; sequence ERRGRLPQHTY. The helical transmembrane segment at 42-62 threads the bilayer; sequence LDYSITNFFAALLIAFTFGEI. Residues 63-80 lie on the Extracellular side of the membrane; the sequence is GKGKPDEPNFLAQLAQDN. The helical transmembrane segment at 81-101 threads the bilayer; that stretch reads WPSVLFAMGGGVVLSLGNLSS. At 102-103 the chain is on the cytoplasmic side; that stretch reads QY. The helical transmembrane segment at 104–124 threads the bilayer; sequence AFAFVGLSVTEVITASITVVI. At 125–137 the chain is on the extracellular side; sequence GTTLNYFLDDKIN. A helical transmembrane segment spans residues 138 to 158; sequence KAEILFPGVGCFLIAVFLGFC. The Cytoplasmic portion of the chain corresponds to 159–231; sequence RFNSSNASDN…RAIKVFGKST (73 aa). 223 to 230 provides a ligand contact to ATP; it reads AIKVFGKS. The helical transmembrane segment at 232–252 threads the bilayer; it reads LIGLALTFSAGLCFSMFSPAF. Over 253 to 274 the chain is Extracellular; that stretch reads NLATNDQWHTLPNGIPHLTVYT. The chain crosses the membrane as a helical span at residues 275 to 295; that stretch reads AFFYFSISCFVIAIILNITFL. At 296 to 317 the chain is on the cytoplasmic side; sequence YHPVLNLPKSSLKAYLADSDGR. Residues 318 to 338 traverse the membrane as a helical segment; it reads IWALLAGLLCGFGNSLQFMGG. The Extracellular portion of the chain corresponds to 339–376; the sequence is QAAGYQQQSLCRHFLCKHFWGVLLFGEYRRSSRKTYIC.

This sequence belongs to the plant ureide permease (TC 2.A.7.19) family.

It localises to the membrane. Transports a wide spectrum of oxo derivatives of heterocyclic nitrogen compounds. The sequence is that of Probable ureide permease A3 (A3) from Vigna unguiculata (Cowpea).